A 1657-amino-acid chain; its full sequence is Alsin (1657 aa).

3 RCC1 repeats span residues 59-108 (DGEV…AVTD), 109-167 (NGVA…ALSI), and 169-218 (REIW…ALVQ). A disordered region spans residues 432 to 480 (TGAQAGSSAIGPEGLKDSREEQVKQESMQGKKSSSLVDIREEETEGGSR). Residues 445-455 (GLKDSREEQVK) show a composition bias toward basic and acidic residues. Over residues 456–467 (QESMQGKKSSSL) the composition is skewed to polar residues. 4 positions are modified to phosphoserine: Ser465, Ser466, Ser483, and Ser492. Phosphothreonine is present on Thr510. 2 RCC1 repeats span residues 525–576 (RTEV…ALTA) and 578–627 (SQVY…FLVD). Residue Lys533 is modified to N6-acetyllysine. Residues 690-885 (GYIASLHELA…ECLALHLGRK (196 aa)) form the DH domain. One can recognise a PH domain in the interval 901 to 1007 (GKMTDSLRKP…RAISQAVDQA (107 aa)). MORN repeat units lie at residues 1049 to 1071 (YDGR…DGKM), 1072 to 1094 (YSGM…NKAM), 1100 to 1122 (YVGH…SGEV), 1123 to 1145 (FEGC…KLTS), 1151 to 1173 (FIGQ…TRGE), 1175 to 1197 (YMGM…FGLY), 1198 to 1220 (YEGN…DDTI), and 1221 to 1244 (YEGE…NGDY). Position 1335 is a phosphoserine (Ser1335). The region spanning 1513–1657 (KQPDIALLGF…YYQIQREKLN (145 aa)) is the VPS9 domain.

As to quaternary structure, forms a heteromeric complex with ALS2CL. Interacts with ALS2CL.

Functionally, may act as a GTPase regulator. Controls survival and growth of spinal motoneurons. In Homo sapiens (Human), this protein is Alsin (ALS2).